Reading from the N-terminus, the 158-residue chain is MTQEKIKIHVSNEQTCIPIHLVSVEKLVLTLLEHLKVTTNEIFIYFLEDKALAELHDKVFADPSLTDTITLPIDAPGDPAYPHVLGEAFISPQAALRFLENTSPNQEDIYEEISRYLVHSILHMLGYDDTSSEEKRKMRVKENQILCMLRKKHALLTA.

Zn(2+) is bound by residues histidine 119, histidine 123, and aspartate 129.

The protein belongs to the endoribonuclease YbeY family. The cofactor is Zn(2+).

The protein resides in the cytoplasm. Its function is as follows. Single strand-specific metallo-endoribonuclease involved in late-stage 70S ribosome quality control and in maturation of the 3' terminus of the 16S rRNA. In Chlamydia pneumoniae (Chlamydophila pneumoniae), this protein is Endoribonuclease YbeY.